Reading from the N-terminus, the 35-residue chain is Kappa-theraphotoxin-Tb1c (35 aa).

Cystine bridges form between Cys-3–Cys-18, Cys-10–Cys-23, and Cys-17–Cys-30.

The protein belongs to the neurotoxin 10 (Hwtx-1) family. 59 (Tltx) subfamily. As to quaternary structure, monomer. Expressed by the venom gland.

The protein resides in the secreted. Blocks Kv4.2/KCND2 voltage-gated potassium channels probably by shifting the voltage-dependence of channel activation to more depolarized potentials and by binding to the S3-S4 linker region of the voltage sensor domain. The polypeptide is Kappa-theraphotoxin-Tb1c (Theraphosa blondi (Goliath birdeating spider)).